The following is a 239-amino-acid chain: tRNA (guanine-N(1)-)-methyltransferase (239 aa).

Residues Gly-109 and 128–133 (IGDYVL) each bind S-adenosyl-L-methionine.

It belongs to the RNA methyltransferase TrmD family. In terms of assembly, homodimer.

Its subcellular location is the cytoplasm. The catalysed reaction is guanosine(37) in tRNA + S-adenosyl-L-methionine = N(1)-methylguanosine(37) in tRNA + S-adenosyl-L-homocysteine + H(+). Functionally, specifically methylates guanosine-37 in various tRNAs. The protein is tRNA (guanine-N(1)-)-methyltransferase of Thermus thermophilus (strain ATCC 27634 / DSM 579 / HB8).